The sequence spans 251 residues: uncharacterized protein (251 aa).

Position 36-43 (36-43) interacts with ATP; that stretch reads GKQGTGKT. The segment at 230 to 251 is disordered; sequence SDNKTENPSNPSLLTKIDDVTR.

In terms of biological role, this protein may be involved in virus assembly. Essential for virus function. This is an uncharacterized protein from Sulfolobus spindle-shape virus 1 (SSV1).